The primary structure comprises 641 residues: Depolymerase 1, capsule K47-specific (641 aa).

In the N-terminal section; belongs to the Przondovirus depolymerase 2 family. Homotrimer. Interacts (via N-terminus) with depolymerase 1 (via N-terminus); this interaction probably gives rise to a branched tailspike.

It is found in the virion. In terms of biological role, functions as a receptor binding protein (RBP) and probably mediates the attachment to the host capsular exopolysaccharides. Displays a depolymerase activity that specifically degrades some K47-type polysaccharides of Klebsiella pneumoniae capsule, which allows the phage to reach the host cell membrane and bind the entry receptor. The chain is Depolymerase 1, capsule K47-specific from Klebsiella pneumoniae (Bacteriophage vB_KpnP_IME205).